Here is a 275-residue protein sequence, read N- to C-terminus: HUWE1-associated protein modifying stress responses 1 (275 aa).

Over residues 32-44 (AEQDEQLPPELQE) the composition is skewed to acidic residues. The tract at residues 32–51 (AEQDEQLPPELQEEAAAAAQ) is disordered. The HUWE1-binding and HAPSTR1 oligomerization (HBO) domain stretch occupies residues 80 to 152 (QQPGLSLWVP…LISFLCGKVP (73 aa)). 3 disordered regions span residues 155-181 (RNSRAPPRLTVVSPNRATSTETSSSVE), 204-227 (SVRSSTPGSPTHVSSGSNASRRRN), and 250-275 (GTRKRTSAQCGDVITDSPTHKRNRMI). A Phosphoserine modification is found at Ser-167. A compositionally biased stretch (low complexity) spans 172–181 (TSTETSSSVE). Residues 204-216 (SVRSSTPGSPTHV) show a composition bias toward polar residues. Position 212 is a phosphoserine (Ser-212).

Belongs to the HAPSTR1 family. In terms of assembly, homooligomer. Heterooligomer with HAPSTR2; the interaction is direct and stabilizes HAPSTR1. Interacts with HUWE1. Post-translationally, ubiquitinated by HUWE1. Promotes HAPSTR1 degradation through polyubiquitination.

It is found in the nucleus. Its subcellular location is the cytoplasm. Acts as a central player within a network of stress response pathways promoting cellular adaptability. The E3 ligase HUWE1 assists HAPSTR1 in controlling stress signaling and in turn, HUWE1 feeds back to promote the degradation of HAPSTR1. HAPSTR1 represents a central coordination mechanism for stress response programs. Functions as a negative regulator of TP53/P53 in the cellular response to telomere erosion and probably also DNA damage. May attenuate p53/TP53 activation through the E3 ubiquitin ligase HUWE1. This Homo sapiens (Human) protein is HUWE1-associated protein modifying stress responses 1.